Reading from the N-terminus, the 195-residue chain is Protein lin-28 homolog A (195 aa).

A CSD domain is found at 33-106 (QGSGVCKWFN…GLESTRVTGP (74 aa)). The disordered stretch occupies residues 98 to 126 (LESTRVTGPGGAPCIGSERRPKVKGQQKR). A flexible linker region spans residues 107–130 (GGAPCIGSERRPKVKGQQKRRQKG). 2 CCHC-type zinc fingers span residues 131–148 (DRCY…ECKL) and 153–170 (KKCH…QCPA). Zn(2+)-binding residues include cysteine 133, cysteine 136, histidine 141, cysteine 146, cysteine 155, cysteine 158, histidine 163, and cysteine 168. The disordered stretch occupies residues 175–195 (AANLEEQPISEEQELIPETME). Residues 182 to 195 (PISEEQELIPETME) are compositionally biased toward acidic residues.

The protein belongs to the lin-28 family. In terms of assembly, monomer.

The protein resides in the cytoplasm. It is found in the rough endoplasmic reticulum. The protein localises to the P-body. Its subcellular location is the stress granule. It localises to the nucleus. The protein resides in the nucleolus. RNA-binding protein that inhibits processing of pre-let-7 miRNAs and regulates translation of mRNAs that control developmental timing, pluripotency and metabolism. Seems to recognize a common structural G-quartet (G4) feature in its miRNA and mRNA targets. 'Translational enhancer' that drives specific mRNAs to polysomes and increases the efficiency of protein synthesis. Its association with the translational machinery and target mRNAs results in an increased number of initiation events per molecule of mRNA and, indirectly, in mRNA stabilization. Suppressor of microRNA (miRNA) biogenesis, including that of let-7. Binds specific target miRNA precursors (pre-miRNAs), recognizing an 5'-GGAG-3' motif found in their terminal loop, and recruits uridylyltransferase. This results in the terminal uridylation of target pre-miRNAs. Uridylated pre-miRNAs fail to be processed by Dicer and undergo degradation. Localized to the periendoplasmic reticulum area, binds to a large number of spliced mRNAs and inhibits the translation of mRNAs destined for the ER, reducing the synthesis of transmembrane proteins, ER or Golgi lumen proteins, and secretory proteins. Binds to and enhances the translation of mRNAs for several metabolic enzymes, increasing glycolysis and oxidative phosphorylation. Which, with the let-7 repression may enhance tissue repair in adult tissue. In Xenopus tropicalis (Western clawed frog), this protein is Protein lin-28 homolog A (lin28a).